The following is a 189-amino-acid chain: Interferon alpha-21 (189 aa).

The first 23 residues, 1-23 (MALSFSLLMAVLVLSYKSICSLG), serve as a signal peptide directing secretion. 2 disulfides stabilise this stretch: Cys-24/Cys-122 and Cys-52/Cys-162.

Belongs to the alpha/beta interferon family.

Its subcellular location is the secreted. Functionally, produced by macrophages, IFN-alpha have antiviral activities. Interferon stimulates the production of two enzymes: a protein kinase and an oligoadenylate synthetase. The protein is Interferon alpha-21 (IFNA21) of Homo sapiens (Human).